The primary structure comprises 226 residues: Cold-regulated 413 inner membrane protein 2, chloroplastic (226 aa).

The N-terminal 76 residues, 1 to 76 (MASLCLSSSR…RKRGSSVVCY (76 aa)), are a transit peptide targeting the chloroplast. Over 77–79 (ATP) the chain is Stromal. Residues 80–100 (MLSVHNLQWISTISCVALMFA) traverse the membrane as a helical segment. Residues 101–103 (RGT) lie on the Chloroplast intermembrane side of the membrane. A helical transmembrane segment spans residues 104–124 (GIHKSFVVPLFALQAPMGIVS). The Stromal segment spans residues 125 to 129 (WMKGE). The chain crosses the membrane as a helical span at residues 130–150 (YGIWAAFLALLTRLFFSFPVE). Topologically, residues 151–152 (LE) are chloroplast intermembrane. A helical transmembrane segment spans residues 153–173 (LPFIALLLVIVAPYQVMSIRG). Residues 174–176 (KQE) are Stromal-facing. Residues 177–197 (GAILSLAISCFLAFQHFSRAG) traverse the membrane as a helical segment. Over 198–205 (TLQKAFDQ) the chain is Chloroplast intermembrane. A helical membrane pass occupies residues 206 to 226 (NSVLATVAIIGVTVVSFLFLI).

It belongs to the Cold-regulated 413 protein family.

It localises to the plastid. The protein localises to the chloroplast inner membrane. In Arabidopsis thaliana (Mouse-ear cress), this protein is Cold-regulated 413 inner membrane protein 2, chloroplastic (COR413IM2).